The chain runs to 356 residues: Protein MGF 360-10L (356 aa).

One copy of the ANK repeat lies at 58 to 90 (DLNTALMIAAKENNYQLIKLFTEWGANINYGYI). N-linked (GlcNAc...) asparagine; by host glycosylation is present at asparagine 125. Helical transmembrane passes span 206–228 (LNTW…YLYE) and 249–271 (NFLT…LAAI). N-linked (GlcNAc...) asparagine; by host glycosylation is present at asparagine 352.

The protein belongs to the asfivirus MGF 360 family.

The protein localises to the host membrane. Its function is as follows. Plays a role in virus cell tropism, and may be required for efficient virus replication in macrophages. The chain is Protein MGF 360-10L from Ornithodoros (relapsing fever ticks).